The following is a 179-amino-acid chain: Large ribosomal subunit protein uL5 (179 aa).

The protein belongs to the universal ribosomal protein uL5 family. In terms of assembly, part of the 50S ribosomal subunit; part of the 5S rRNA/L5/L18/L25 subcomplex. Contacts the 5S rRNA and the P site tRNA. Forms a bridge to the 30S subunit in the 70S ribosome.

This is one of the proteins that bind and probably mediate the attachment of the 5S RNA into the large ribosomal subunit, where it forms part of the central protuberance. In the 70S ribosome it contacts protein S13 of the 30S subunit (bridge B1b), connecting the 2 subunits; this bridge is implicated in subunit movement. Contacts the P site tRNA; the 5S rRNA and some of its associated proteins might help stabilize positioning of ribosome-bound tRNAs. The protein is Large ribosomal subunit protein uL5 of Cronobacter sakazakii (strain ATCC BAA-894) (Enterobacter sakazakii).